Consider the following 1420-residue polypeptide: DNA-directed RNA polymerase subunit beta' (1420 aa).

Positions 70, 72, 85, and 88 each coordinate Zn(2+). The Mg(2+) site is built by aspartate 464, aspartate 466, and aspartate 468. 4 residues coordinate Zn(2+): cysteine 823, cysteine 897, cysteine 904, and cysteine 907.

Belongs to the RNA polymerase beta' chain family. In terms of assembly, the RNAP catalytic core consists of 2 alpha, 1 beta, 1 beta' and 1 omega subunit. When a sigma factor is associated with the core the holoenzyme is formed, which can initiate transcription. Mg(2+) is required as a cofactor. It depends on Zn(2+) as a cofactor.

It catalyses the reaction RNA(n) + a ribonucleoside 5'-triphosphate = RNA(n+1) + diphosphate. Its function is as follows. DNA-dependent RNA polymerase catalyzes the transcription of DNA into RNA using the four ribonucleoside triphosphates as substrates. In Polynucleobacter necessarius subsp. necessarius (strain STIR1), this protein is DNA-directed RNA polymerase subunit beta'.